We begin with the raw amino-acid sequence, 341 residues long: Putative UPF0607 protein ENSP00000383783 (341 aa).

Residues 75–101 (EVRAEEPKEATEVKDQVETQGQEDNKR) show a composition bias toward basic and acidic residues. Disordered regions lie at residues 75-115 (EVRA…TSSL) and 216-278 (GLLM…PPPA). Residues 234 to 245 (SSRSSPSRAASH) show a composition bias toward low complexity.

Belongs to the UPF0607 family.

The protein is Putative UPF0607 protein ENSP00000383783 of Homo sapiens (Human).